A 357-amino-acid chain; its full sequence is Peptide chain release factor 1 (357 aa).

Glutamine 234 carries the post-translational modification N5-methylglutamine. Residues 284-307 are compositionally biased toward basic and acidic residues; that stretch reads KKQEQRSNDRKQQVGSGDRSERIR. Residues 284–313 form a disordered region; the sequence is KKQEQRSNDRKQQVGSGDRSERIRTYNFPQ.

The protein belongs to the prokaryotic/mitochondrial release factor family. In terms of processing, methylated by PrmC. Methylation increases the termination efficiency of RF1.

The protein resides in the cytoplasm. Functionally, peptide chain release factor 1 directs the termination of translation in response to the peptide chain termination codons UAG and UAA. The chain is Peptide chain release factor 1 from Borrelia hermsii (strain HS1 / DAH).